The following is a 66-amino-acid chain: UPF0337 protein BP1738 (66 aa).

Belongs to the UPF0337 (CsbD) family.

The protein is UPF0337 protein BP1738 of Bordetella pertussis (strain Tohama I / ATCC BAA-589 / NCTC 13251).